The sequence spans 201 residues: MQPFIAHTGLAVIIDSANVDTDQIIPKQFLSKVTRDGFGIHLFHDWRYLDDAGDQPNPDFNLNKPRYKGASILVSQENFGCGSSREHAPWALADFGLKAIIAPSFADIFYGNSINNGLLPVKLTEAEVEQIMAEVEALPGADVTVDLQALTVTSPSGSVFSFEIAESARHNLLNGLDAIGLTLAHGDAISHYEANLPAWRA.

It belongs to the LeuD family. LeuD type 1 subfamily. As to quaternary structure, heterodimer of LeuC and LeuD.

It catalyses the reaction (2R,3S)-3-isopropylmalate = (2S)-2-isopropylmalate. The protein operates within amino-acid biosynthesis; L-leucine biosynthesis; L-leucine from 3-methyl-2-oxobutanoate: step 2/4. Its function is as follows. Catalyzes the isomerization between 2-isopropylmalate and 3-isopropylmalate, via the formation of 2-isopropylmaleate. This Shewanella piezotolerans (strain WP3 / JCM 13877) protein is 3-isopropylmalate dehydratase small subunit.